The chain runs to 246 residues: DNA repair protein RecO (246 aa).

It belongs to the RecO family.

Its function is as follows. Involved in DNA repair and RecF pathway recombination. In Methylobacterium nodulans (strain LMG 21967 / CNCM I-2342 / ORS 2060), this protein is DNA repair protein RecO.